Reading from the N-terminus, the 200-residue chain is uncharacterized protein (200 aa).

A helical membrane pass occupies residues 7-29 (FFFLFSFISHAMMLTGLIGSSSF).

It is found in the membrane. This is an uncharacterized protein from Saccharomyces cerevisiae (strain ATCC 204508 / S288c) (Baker's yeast).